Reading from the N-terminus, the 968-residue chain is Dynein axonemal intermediate chain 3 (968 aa).

Residues 1–33 (MKDTSSKRPKSKEANKKKTKDKSNADNLPKPEE) are compositionally biased toward basic and acidic residues. 2 disordered regions span residues 1–39 (MKDT…ASEP) and 136–166 (KPPA…PEPQ). Residues 141 to 157 (GADEQMEDEEQQEEEEE) are compositionally biased toward acidic residues. WD repeat units lie at residues 407-447 (ECPD…DRLQ), 480-536 (GHKA…VMVH), and 712-753 (VYSK…RQPS). Positions 830–857 (LHTHTDQLRVLEERVREAKQNLLAVSDR) form a coiled coil. Positions 897–919 (KRQSDHQKKKKETEAEQQKKKTE) are enriched in basic and acidic residues. Positions 897–930 (KRQSDHQKKKKETEAEQQKKKTELVTPPKQEEEV) are disordered.

Part of the multisubunit axonemal dynein complex formed at least of two heavy chains and a number of intermediate and light chains.

It is found in the cytoplasm. Its function is as follows. May be involved in the regulation of cilia function. In Danio rerio (Zebrafish), this protein is Dynein axonemal intermediate chain 3 (dnai3).